A 171-amino-acid polypeptide reads, in one-letter code: Shikimate kinase (171 aa).

Residue 14–19 (GAGKST) coordinates ATP. Position 18 (serine 18) interacts with Mg(2+). 3 residues coordinate substrate: aspartate 36, arginine 60, and glycine 82. Residue arginine 120 participates in ATP binding. Arginine 139 is a binding site for substrate. Position 156 (glutamine 156) interacts with ATP.

This sequence belongs to the shikimate kinase family. Monomer. It depends on Mg(2+) as a cofactor.

It is found in the cytoplasm. The catalysed reaction is shikimate + ATP = 3-phosphoshikimate + ADP + H(+). Its pathway is metabolic intermediate biosynthesis; chorismate biosynthesis; chorismate from D-erythrose 4-phosphate and phosphoenolpyruvate: step 5/7. Functionally, catalyzes the specific phosphorylation of the 3-hydroxyl group of shikimic acid using ATP as a cosubstrate. The sequence is that of Shikimate kinase from Shewanella pealeana (strain ATCC 700345 / ANG-SQ1).